A 384-amino-acid polypeptide reads, in one-letter code: DNA polymerase IV (384 aa).

A UmuC domain is found at 5–182; sequence IIHVDMDAFF…LPVTKVHGIG (178 aa). Mg(2+) is bound by residues Asp-9, Met-10, and Asp-103. Glu-104 is an active-site residue.

This sequence belongs to the DNA polymerase type-Y family. Monomer. Mg(2+) serves as cofactor.

It is found in the cytoplasm. The enzyme catalyses DNA(n) + a 2'-deoxyribonucleoside 5'-triphosphate = DNA(n+1) + diphosphate. In terms of biological role, poorly processive, error-prone DNA polymerase involved in translesion repair and untargeted mutagenesis. Copies undamaged DNA at stalled replication forks, which arise in vivo from mismatched or misaligned primer ends. These misaligned primers can be extended by PolIV. Exhibits no 3'-5' exonuclease (proofreading) activity. Involved in translesional synthesis. Primer extension fidelity in vitro is temperature-dependent. Inserts a correct base opposite templating bases at 70 degrees Celsius, but at 37 degrees Celsius in addition to correct base pairing, base transitions, transversions and frameshifts can occur. Preferably forms erroneous base pairs C:T. Bypasses 8-oxo-dG oxidative damage by incorporating dATP or dCTP opposite of the damaged DNA template site at both temperatures in vitro. This chain is DNA polymerase IV, found in Caldanaerobacter subterraneus subsp. tengcongensis (strain DSM 15242 / JCM 11007 / NBRC 100824 / MB4) (Thermoanaerobacter tengcongensis).